A 308-amino-acid chain; its full sequence is L-lactate dehydrogenase 2 (308 aa).

Residues Val-14, Asp-35, Tyr-65, and 79–80 contribute to the NAD(+) site; that span reads GA. Arg-88 provides a ligand contact to substrate. Ser-101 is a binding site for NAD(+). 120–123 is a binding site for substrate; sequence NPVD. Thr-143 contributes to the NAD(+) binding site. Residue 148–151 coordinates substrate; that stretch reads DTAR. Catalysis depends on His-175, which acts as the Proton acceptor. Thr-225 serves as a coordination point for substrate.

Belongs to the LDH/MDH superfamily. LDH family. Homotetramer.

The protein resides in the cytoplasm. It carries out the reaction (S)-lactate + NAD(+) = pyruvate + NADH + H(+). The protein operates within fermentation; pyruvate fermentation to lactate; (S)-lactate from pyruvate: step 1/1. Functionally, catalyzes the conversion of lactate to pyruvate. This is L-lactate dehydrogenase 2 from Lactobacillus johnsonii (strain CNCM I-12250 / La1 / NCC 533).